The sequence spans 279 residues: Shikimate dehydrogenase (NADP(+)) (279 aa).

Residues 20–22 and T67 each bind shikimate; that span reads SRS. K71 serves as the catalytic Proton acceptor. D83 provides a ligand contact to NADP(+). Shikimate contacts are provided by N92 and D108. NADP(+) is bound by residues 134–138 and L223; that span reads GAGGA. Position 225 (Y225) interacts with shikimate. G246 lines the NADP(+) pocket.

The protein belongs to the shikimate dehydrogenase family. As to quaternary structure, homodimer.

The catalysed reaction is shikimate + NADP(+) = 3-dehydroshikimate + NADPH + H(+). It participates in metabolic intermediate biosynthesis; chorismate biosynthesis; chorismate from D-erythrose 4-phosphate and phosphoenolpyruvate: step 4/7. Its function is as follows. Involved in the biosynthesis of the chorismate, which leads to the biosynthesis of aromatic amino acids. Catalyzes the reversible NADPH linked reduction of 3-dehydroshikimate (DHSA) to yield shikimate (SA). The sequence is that of Shikimate dehydrogenase (NADP(+)) from Cereibacter sphaeroides (strain KD131 / KCTC 12085) (Rhodobacter sphaeroides).